Here is a 428-residue protein sequence, read N- to C-terminus: 3-phosphoshikimate 1-carboxyvinyltransferase (428 aa).

Positions 22, 23, and 27 each coordinate 3-phosphoshikimate. Lys-22 contributes to the phosphoenolpyruvate binding site. Phosphoenolpyruvate-binding residues include Gly-96 and Arg-124. Ser-171, Ser-172, Gln-173, Ser-198, Asp-311, and Lys-338 together coordinate 3-phosphoshikimate. Gln-173 contributes to the phosphoenolpyruvate binding site. Asp-311 functions as the Proton acceptor in the catalytic mechanism. Residues Arg-342 and Arg-383 each coordinate phosphoenolpyruvate.

This sequence belongs to the EPSP synthase family. In terms of assembly, monomer.

The protein resides in the cytoplasm. The catalysed reaction is 3-phosphoshikimate + phosphoenolpyruvate = 5-O-(1-carboxyvinyl)-3-phosphoshikimate + phosphate. The protein operates within metabolic intermediate biosynthesis; chorismate biosynthesis. Its function is as follows. Catalyzes the transfer of the enolpyruvyl moiety of phosphoenolpyruvate (PEP) to the 5-hydroxyl of shikimate-3-phosphate (S3P) to produce enolpyruvyl shikimate-3-phosphate and inorganic phosphate. This Methanopyrus kandleri (strain AV19 / DSM 6324 / JCM 9639 / NBRC 100938) protein is 3-phosphoshikimate 1-carboxyvinyltransferase.